The chain runs to 595 residues: Cardiolipin synthase (CMP-forming) / mitochondrial hydrolase fusion protein (595 aa).

The transit peptide at 1 to 24 directs the protein to the mitochondrion; that stretch reads MLHTINYRSWHLAARQLGRSTFRK. 2 helical membrane passes run 538 to 560 and 564 to 586; these read ALQL…ASFA and LFYI…RNTF.

In the N-terminal section; belongs to the HAD-like hydrolase superfamily. This sequence in the C-terminal section; belongs to the CDP-alcohol phosphatidyltransferase class-I family. It depends on Mg(2+) as a cofactor. In terms of processing, proteolytically cleaved, presumably during its import into the mitochondrion by mitochondrial processing peptidase.

The protein localises to the mitochondrion. Its subcellular location is the mitochondrion inner membrane. It carries out the reaction a CDP-1,2-diacyl-sn-glycerol + a 1,2-diacyl-sn-glycero-3-phospho-(1'-sn-glycerol) = a cardiolipin + CMP + H(+). Functionally, catalyzes the synthesis of cardiolipin (CL) (diphosphatidylglycerol) by specifically transferring a phosphatidyl group from CDP-diacylglycerol to phosphatidylglycerol (PG). CL is a key phospholipid in mitochondrial membranes and plays important roles in maintaining the functional integrity and dynamics of mitochondria under both optimal and stress conditions. In terms of biological role, activity is dispensable for viability. The protein is Cardiolipin synthase (CMP-forming) / mitochondrial hydrolase fusion protein of Schizosaccharomyces pombe (strain 972 / ATCC 24843) (Fission yeast).